Consider the following 429-residue polypeptide: Adenylosuccinate synthetase (429 aa).

GTP-binding positions include 12–18 (GDEGKGK) and 40–42 (GHT). The active-site Proton acceptor is the Asp-13. The Mg(2+) site is built by Asp-13 and Gly-40. Residues 13–16 (DEGK), 38–41 (NAGH), Thr-128, Arg-142, Gln-223, Thr-238, and Arg-302 contribute to the IMP site. His-41 acts as the Proton donor in catalysis. 298–304 (TVTGRPR) lines the substrate pocket. GTP-binding positions include Arg-304, 330-332 (LLD), and 412-414 (SVG).

Belongs to the adenylosuccinate synthetase family. In terms of assembly, homodimer. It depends on Mg(2+) as a cofactor.

It is found in the cytoplasm. It catalyses the reaction IMP + L-aspartate + GTP = N(6)-(1,2-dicarboxyethyl)-AMP + GDP + phosphate + 2 H(+). It participates in purine metabolism; AMP biosynthesis via de novo pathway; AMP from IMP: step 1/2. In terms of biological role, plays an important role in the de novo pathway of purine nucleotide biosynthesis. Catalyzes the first committed step in the biosynthesis of AMP from IMP. The sequence is that of Adenylosuccinate synthetase from Lactobacillus acidophilus (strain ATCC 700396 / NCK56 / N2 / NCFM).